We begin with the raw amino-acid sequence, 405 residues long: Chorismate synthase (405 aa).

Positions 43 and 49 each coordinate NADP(+). FMN is bound by residues 138 to 140 and 259 to 260; these read RAS and QA. Over residues 275–286 the composition is skewed to basic and acidic residues; the sequence is RRGSQAHDEMRP. A disordered region spans residues 275–308; that stretch reads RRGSQAHDEMRPGPDGVLRSTNRAGGLEGGMTNG. Residues Gly303, 318–322, and Arg344 each bind FMN; that span reads KPIST.

This sequence belongs to the chorismate synthase family. Homotetramer. Requires FMNH2 as cofactor.

It catalyses the reaction 5-O-(1-carboxyvinyl)-3-phosphoshikimate = chorismate + phosphate. Its pathway is metabolic intermediate biosynthesis; chorismate biosynthesis; chorismate from D-erythrose 4-phosphate and phosphoenolpyruvate: step 7/7. Its function is as follows. Catalyzes the anti-1,4-elimination of the C-3 phosphate and the C-6 proR hydrogen from 5-enolpyruvylshikimate-3-phosphate (EPSP) to yield chorismate, which is the branch point compound that serves as the starting substrate for the three terminal pathways of aromatic amino acid biosynthesis. This reaction introduces a second double bond into the aromatic ring system. The sequence is that of Chorismate synthase from Nocardia farcinica (strain IFM 10152).